A 210-amino-acid chain; its full sequence is UPF0301 protein CPS_1252 (210 aa).

The protein belongs to the UPF0301 (AlgH) family.

The chain is UPF0301 protein CPS_1252 from Colwellia psychrerythraea (strain 34H / ATCC BAA-681) (Vibrio psychroerythus).